We begin with the raw amino-acid sequence, 432 residues long: Phosphomethylpyrimidine synthase (432 aa).

Substrate contacts are provided by residues N69, M98, Y127, H163, 185 to 187 (SRG), 226 to 229 (DACR), and E265. H269 is a binding site for Zn(2+). Residue Y292 participates in substrate binding. A Zn(2+)-binding site is contributed by H333. The [4Fe-4S] cluster site is built by C409, C412, and C416.

It belongs to the ThiC family. Requires [4Fe-4S] cluster as cofactor.

The enzyme catalyses 5-amino-1-(5-phospho-beta-D-ribosyl)imidazole + S-adenosyl-L-methionine = 4-amino-2-methyl-5-(phosphooxymethyl)pyrimidine + CO + 5'-deoxyadenosine + formate + L-methionine + 3 H(+). It participates in cofactor biosynthesis; thiamine diphosphate biosynthesis. Its function is as follows. Catalyzes the synthesis of the hydroxymethylpyrimidine phosphate (HMP-P) moiety of thiamine from aminoimidazole ribotide (AIR) in a radical S-adenosyl-L-methionine (SAM)-dependent reaction. In Pelotomaculum thermopropionicum (strain DSM 13744 / JCM 10971 / SI), this protein is Phosphomethylpyrimidine synthase.